The following is a 219-amino-acid chain: 2-hydroxy-3-keto-5-methylthiopentenyl-1-phosphate phosphatase (219 aa).

It belongs to the HAD-like hydrolase superfamily. MtnX family.

The enzyme catalyses 2-hydroxy-5-methylsulfanyl-3-oxopent-1-enyl phosphate + H2O = 1,2-dihydroxy-5-(methylsulfanyl)pent-1-en-3-one + phosphate. The protein operates within amino-acid biosynthesis; L-methionine biosynthesis via salvage pathway; L-methionine from S-methyl-5-thio-alpha-D-ribose 1-phosphate: step 4/6. In terms of biological role, dephosphorylates 2-hydroxy-3-keto-5-methylthiopentenyl-1-phosphate (HK-MTPenyl-1-P) yielding 1,2-dihydroxy-3-keto-5-methylthiopentene (DHK-MTPene). This Exiguobacterium sibiricum (strain DSM 17290 / CCUG 55495 / CIP 109462 / JCM 13490 / 255-15) protein is 2-hydroxy-3-keto-5-methylthiopentenyl-1-phosphate phosphatase.